Here is a 97-residue protein sequence, read N- to C-terminus: Apolipoprotein C-II (97 aa).

Positions 1–22 (MGSRFFLALFLVLLVLGNEVQG) are cleaved as a signal peptide. Residues 63–71 (SVDEKLRDM) form a lipid binding region. Residues 75 to 97 (SSAAMSTYAGIFTDQLLTLLKGE) are lipoprotein lipase cofactor.

It belongs to the apolipoprotein C2 family. Proapolipoprotein C-II is synthesized as a sialic acid containing glycoprotein which is subsequently desialylated prior to its proteolytic processing. Post-translationally, proapolipoprotein C-II, the major form found in plasma undergoes proteolytic cleavage of its N-terminal hexapeptide to generate the mature form apolipoprotein C-II, which occurs as the minor form in plasma.

The protein resides in the secreted. In terms of biological role, component of chylomicrons, very low-density lipoproteins (VLDL), low-density lipoproteins (LDL), and high-density lipoproteins (HDL) in plasma. Plays an important role in lipoprotein metabolism as an activator of lipoprotein lipase. This chain is Apolipoprotein C-II (Apoc2), found in Grammomys surdaster (African woodland thicket rat).